Consider the following 458-residue polypeptide: Kelch repeat and BTB domain-containing protein 13 (458 aa).

The 68-residue stretch at 7–74 (VPVQVWVDGQ…LRGERPALAA (68 aa)) folds into the BTB domain. Kelch repeat units lie at residues 159-209 (AVST…TLGN), 210-258 (KLYI…GFEG), 259-305 (RLYA…QARG), 307-350 (LFVC…VAHR), and 352-400 (SLYV…VVRG).

In terms of assembly, component of the BCR(KBTBD13) E3 ubiquitin ligase complex, at least composed of CUL3 and KBTBD13 and RBX1. Interacts with CUL3. In terms of processing, autoubiquitinated. As to expression, expressed in skeletal muscle, heart and lung.

The protein localises to the cytoplasm. The protein operates within protein modification; protein ubiquitination. Its function is as follows. Substrate-specific adapter of a BCR (BTB-CUL3-RBX1) E3 ubiquitin ligase complex. The polypeptide is Kelch repeat and BTB domain-containing protein 13 (Kbtbd13) (Mus musculus (Mouse)).